The chain runs to 343 residues: Armadillo repeat-containing protein 10 (343 aa).

A helical transmembrane segment spans residues 5–27; the sequence is RGAGWVAAGLLLGAGACYCIYRL. Residues 43 to 83 form a disordered region; it reads SKSAGALEEGTSEGQLCGRSARPQTGGTWESQWSKTSQPED. Phosphoserine is present on serine 45. The residue at position 50 (glutamate 50) is a Phosphothreonine. Residues 64–82 are compositionally biased toward polar residues; sequence RPQTGGTWESQWSKTSQPE. Threonine 85 carries the post-translational modification Phosphothreonine. The ARM repeat unit spans residues 138 to 180; the sequence is GGIPIVANKINHSNQSIKEKALNALNNLSVNVENQIKIKIYIS.

Interacts with the DNA-binding domain of p53/TP53. In terms of tissue distribution, expressed in all tissues tested with higher expression in placenta, liver, kidney, heart and brain.

It localises to the endoplasmic reticulum membrane. The protein localises to the mitochondrion outer membrane. Its function is as follows. May play a role in cell survival and cell growth. May suppress the transcriptional activity of p53/TP53. This Homo sapiens (Human) protein is Armadillo repeat-containing protein 10 (ARMC10).